The chain runs to 325 residues: Heme A synthase (325 aa).

The next 5 helical transmembrane spans lie at 6–26, 88–108, 116–136, 155–175, and 184–204; these read WLAV…FTRL, LVGR…FVVG, LRLC…WYMV, LFCA…PTVI, and LVGC…GLVA. Residue His-246 coordinates heme. Transmembrane regions (helical) follow at residues 248–268, 275–295, and 297–317; these read MSAF…FFYD, VFLV…TLLF, and IPID…GICV. His-305 contacts heme.

It belongs to the COX15/CtaA family. Type 2 subfamily. Interacts with CtaB. Heme b is required as a cofactor.

It is found in the cell membrane. It carries out the reaction Fe(II)-heme o + 2 A + H2O = Fe(II)-heme a + 2 AH2. The protein operates within porphyrin-containing compound metabolism; heme A biosynthesis; heme A from heme O: step 1/1. In terms of biological role, catalyzes the conversion of heme O to heme A by two successive hydroxylations of the methyl group at C8. The first hydroxylation forms heme I, the second hydroxylation results in an unstable dihydroxymethyl group, which spontaneously dehydrates, resulting in the formyl group of heme A. The sequence is that of Heme A synthase from Neorickettsia sennetsu (strain ATCC VR-367 / Miyayama) (Ehrlichia sennetsu).